The chain runs to 133 residues: Meiotically up-regulated gene 15 protein (133 aa).

The protein localises to the cytoplasm. It is found in the nucleus. In terms of biological role, has a role in meiosis. In Schizosaccharomyces pombe (strain 972 / ATCC 24843) (Fission yeast), this protein is Meiotically up-regulated gene 15 protein (mug15).